A 374-amino-acid chain; its full sequence is Queuine tRNA-ribosyltransferase (374 aa).

D89 acts as the Proton acceptor in catalysis. Residues 89-93 (DSGGF), D143, Q187, and G214 each bind substrate. The interval 245-251 (GVGKPED) is RNA binding. D264 acts as the Nucleophile in catalysis. The interval 269–273 (TRNAR) is RNA binding; important for wobble base 34 recognition. Zn(2+) contacts are provided by C302, C304, C307, and H333.

The protein belongs to the queuine tRNA-ribosyltransferase family. As to quaternary structure, homodimer. Within each dimer, one monomer is responsible for RNA recognition and catalysis, while the other monomer binds to the replacement base PreQ1. It depends on Zn(2+) as a cofactor.

The catalysed reaction is 7-aminomethyl-7-carbaguanine + guanosine(34) in tRNA = 7-aminomethyl-7-carbaguanosine(34) in tRNA + guanine. Its pathway is tRNA modification; tRNA-queuosine biosynthesis. Catalyzes the base-exchange of a guanine (G) residue with the queuine precursor 7-aminomethyl-7-deazaguanine (PreQ1) at position 34 (anticodon wobble position) in tRNAs with GU(N) anticodons (tRNA-Asp, -Asn, -His and -Tyr). Catalysis occurs through a double-displacement mechanism. The nucleophile active site attacks the C1' of nucleotide 34 to detach the guanine base from the RNA, forming a covalent enzyme-RNA intermediate. The proton acceptor active site deprotonates the incoming PreQ1, allowing a nucleophilic attack on the C1' of the ribose to form the product. After dissociation, two additional enzymatic reactions on the tRNA convert PreQ1 to queuine (Q), resulting in the hypermodified nucleoside queuosine (7-(((4,5-cis-dihydroxy-2-cyclopenten-1-yl)amino)methyl)-7-deazaguanosine). This Shewanella loihica (strain ATCC BAA-1088 / PV-4) protein is Queuine tRNA-ribosyltransferase.